A 339-amino-acid chain; its full sequence is Nucleoid-associated protein Asuc_0779 (339 aa).

Belongs to the YejK family.

It is found in the cytoplasm. Its subcellular location is the nucleoid. The sequence is that of Nucleoid-associated protein Asuc_0779 from Actinobacillus succinogenes (strain ATCC 55618 / DSM 22257 / CCUG 43843 / 130Z).